We begin with the raw amino-acid sequence, 162 residues long: Nascent polypeptide-associated complex subunit beta (162 aa).

Disordered stretches follow at residues 1-39 (MPVD…NISE) and 130-162 (EQAK…DNVE). Positions 24–33 (TPRRPGKKVA) are enriched in basic residues. Residues 38-103 (SEDEKKLSAT…SQQKDIAELI (66 aa)) enclose the NAC-A/B domain. Positions 146–162 (GDDEIPNLVENFEDNVE) are enriched in acidic residues.

Belongs to the NAC-beta family. Part of the nascent polypeptide-associated complex (NAC), consisting of EGD2 and EGD1. NAC associates with ribosomes via EGD1.

Its subcellular location is the cytoplasm. The protein localises to the nucleus. Component of the nascent polypeptide-associated complex (NAC), a dynamic component of the ribosomal exit tunnel, protecting the emerging polypeptides from interaction with other cytoplasmic proteins to ensure appropriate nascent protein targeting. The NAC complex also promotes mitochondrial protein import by enhancing productive ribosome interactions with the outer mitochondrial membrane and blocks the inappropriate interaction of ribosomes translating non-secretory nascent polypeptides with translocation sites in the membrane of the endoplasmic reticulum. EGD1 may act as a transcription factor that exert a negative effect on the expression of several genes that are transcribed by RNA polymerase II. The sequence is that of Nascent polypeptide-associated complex subunit beta (EGD1) from Yarrowia lipolytica (strain CLIB 122 / E 150) (Yeast).